A 293-amino-acid chain; its full sequence is Cbb3-type cytochrome c oxidase subunit FixP (293 aa).

Residues 1–11 (MSTSHESHHAP) are compositionally biased toward basic and acidic residues. A disordered region spans residues 1–25 (MSTSHESHHAPVDGAGGPSTTGHEW). Residues 43–63 (FYATIIWAFGYWVAYPAWPLV) form a helical membrane-spanning segment. 2 Cytochrome c domains span residues 114-201 (LARA…RSLS) and 209-290 (PAAK…HTLG). Residues Cys127, Cys130, His131, Met178, Cys222, Cys225, His226, and Met267 each contribute to the heme c site.

Belongs to the CcoP / FixP family. Component of the cbb3-type cytochrome c oxidase at least composed of FixN, FixO, FixQ and FixP. The cofactor is heme c.

The protein resides in the cell inner membrane. It functions in the pathway energy metabolism; oxidative phosphorylation. C-type cytochrome. Part of the cbb3-type cytochrome c oxidase complex. FixP subunit is required for transferring electrons from donor cytochrome c via its heme groups to FixO subunit. From there, electrons are shuttled to the catalytic binuclear center of FixN subunit where oxygen reduction takes place. The complex also functions as a proton pump. The protein is Cbb3-type cytochrome c oxidase subunit FixP of Azorhizobium caulinodans (strain ATCC 43989 / DSM 5975 / JCM 20966 / LMG 6465 / NBRC 14845 / NCIMB 13405 / ORS 571).